Reading from the N-terminus, the 317-residue chain is Transaldolase (317 aa).

The active-site Schiff-base intermediate with substrate is K132.

Belongs to the transaldolase family. Type 1 subfamily. In terms of assembly, homodimer.

It is found in the cytoplasm. The catalysed reaction is D-sedoheptulose 7-phosphate + D-glyceraldehyde 3-phosphate = D-erythrose 4-phosphate + beta-D-fructose 6-phosphate. The protein operates within carbohydrate degradation; pentose phosphate pathway; D-glyceraldehyde 3-phosphate and beta-D-fructose 6-phosphate from D-ribose 5-phosphate and D-xylulose 5-phosphate (non-oxidative stage): step 2/3. Its function is as follows. Transaldolase is important for the balance of metabolites in the pentose-phosphate pathway. In Shigella dysenteriae serotype 1 (strain Sd197), this protein is Transaldolase.